Here is a 267-residue protein sequence, read N- to C-terminus: 4-hydroxy-tetrahydrodipicolinate reductase (267 aa).

10 to 15 is an NAD(+) binding site; the sequence is GAGGKM. Arg-38 provides a ligand contact to NADP(+). Residues 100 to 102 and 126 to 129 each bind NAD(+); these read GTT and APNF. His-156 serves as the catalytic Proton donor/acceptor. (S)-2,3,4,5-tetrahydrodipicolinate is bound at residue His-157. The active-site Proton donor is Lys-160. 166–167 is a (S)-2,3,4,5-tetrahydrodipicolinate binding site; that stretch reads GT.

It belongs to the DapB family.

It localises to the cytoplasm. It carries out the reaction (S)-2,3,4,5-tetrahydrodipicolinate + NAD(+) + H2O = (2S,4S)-4-hydroxy-2,3,4,5-tetrahydrodipicolinate + NADH + H(+). The catalysed reaction is (S)-2,3,4,5-tetrahydrodipicolinate + NADP(+) + H2O = (2S,4S)-4-hydroxy-2,3,4,5-tetrahydrodipicolinate + NADPH + H(+). It functions in the pathway amino-acid biosynthesis; L-lysine biosynthesis via DAP pathway; (S)-tetrahydrodipicolinate from L-aspartate: step 4/4. Catalyzes the conversion of 4-hydroxy-tetrahydrodipicolinate (HTPA) to tetrahydrodipicolinate. The protein is 4-hydroxy-tetrahydrodipicolinate reductase of Desulfitobacterium hafniense (strain DSM 10664 / DCB-2).